The sequence spans 126 residues: Hydrogenase maturation factor HypA (126 aa).

H2 lines the Ni(2+) pocket. The Zn(2+) site is built by C78, C81, C97, and C100.

This sequence belongs to the HypA/HybF family.

In terms of biological role, involved in the maturation of [NiFe] hydrogenases. Required for nickel insertion into the metal center of the hydrogenase. The polypeptide is Hydrogenase maturation factor HypA (Methanococcus maripaludis (strain C5 / ATCC BAA-1333)).